The sequence spans 626 residues: Basic helix-loop-helix ARNT-like protein 1 (626 aa).

The interval 1 to 58 is disordered; it reads MADQRMDISSTISDFMSPGPTDLLSGSLSTSGVDCNRKRKGSATDYQESMDTDKDDPH. Serine 17 carries the phosphoserine; by GSK3-beta modification. Low complexity predominate over residues 17–32; that stretch reads SPGPTDLLSGSLSTSG. Threonine 21 is subject to Phosphothreonine; by GSK3-beta. A Nuclear localization signal motif is present at residues 36 to 41; it reads NRKRKG. Residues 72–125 enclose the bHLH domain; the sequence is NAREAHSQIEKRRRDKMNSFIDELASLVPTCNAMSRKLDKLTVLRMAVQHMKTL. Serine 78 is modified (phosphoserine). A Phosphoserine; by CK2 modification is found at serine 90. A Nuclear export signal 1 motif is present at residues 142–152; the sequence is LSDDELKHLIL. Residues 143–215 enclose the PAS 1 domain; that stretch reads SDDELKHLIL…EQLSSSDTAP (73 aa). Lysine 252 is covalently cross-linked (Glycyl lysine isopeptide (Lys-Gly) (interchain with G-Cter in SUMO2 and SUMO3)). Lysine 259 is covalently cross-linked (Glycyl lysine isopeptide (Lys-Gly) (interchain with G-Cter in SUMO); alternate). A Glycyl lysine isopeptide (Lys-Gly) (interchain with G-Cter in SUMO2); alternate cross-link involves residue lysine 259. Positions 326–396 constitute a PAS 2 domain; the sequence is PQPVNGEIRV…ECHRQVLQTR (71 aa). The Nuclear export signal 2 motif lies at 361-369; sequence LAYLPQELL. Residues 401-444 enclose the PAC domain; it reads TNCYKFKIKDGSFITLRSRWFSFMNPWTKEVEYIVSTNTVVLAN. Disordered regions lie at residues 459–492 and 511–595; these read SPHS…RAGA and GSSP…SPSN. The tract at residues 508 to 588 is interaction with CIART; it reads RIRGSSPSSC…IGIDMIDNDQ (81 aa). The segment covering 511 to 521 has biased composition (low complexity); sequence GSSPSSCGSSP. N6-acetyllysine is present on lysine 538.

Component of the circadian clock oscillator which includes the CRY1/2 proteins, CLOCK or NPAS2, BMAL1 or BMAL2, CSNK1D and/or CSNK1E, TIMELESS and the PER1/2/3 proteins. Forms a heterodimer with CLOCK. The CLOCK-BMAL1 heterodimer is required for E-box-dependent transactivation, for CLOCK nuclear translocation and degradation, and, for phosphorylation of both CLOCK and BMAL1. Part of a nuclear complex which also includes RACK1 and PRKCA; RACK1 and PRKCA are recruited to the complex in a circadian manner. Interacts with NPAS2. Interacts with EZH2. Interacts with SUMO3. Interacts with SIRT1. Interacts with AHR. Interacts with ID1, ID2 and ID3. Interacts with DDX4. Interacts with OGT. Interacts with EED and SUZ12. Interacts with MTA1. Interacts with CIART. Interacts with HSP90. Interacts with KAT2B and EP300. Interacts with BHLHE40/DEC1 and BHLHE41/DEC2. Interacts with RELB and the interaction is enhanced in the presence of CLOCK. Interacts with PER1, PER2, CRY1 and CRY2 and this interaction requires a translocation to the nucleus. Interaction of the CLOCK-BMAL1 heterodimer with PER or CRY inhibits transcription activation. Interaction of the CLOCK-BMAL1 with CRY1 is independent of DNA but with PER2 is off DNA. The CLOCK-BMAL1 heterodimer interacts with GSK3B. Interacts with KDM5A. Interacts with KMT2A; in a circadian manner. Interacts with UBE3A. Interacts with PRKCG. Interacts with MAGEL2. Interacts with NCOA2. Interacts with THRAP3. The CLOCK-BMAL1 heterodimer interacts with PASD1. Interacts with PASD1. Interacts with USP9X. Interacts with PIWIL2 (via PIWI domain). Interacts with HDAC3. Interacts with HNF4A. Ubiquitinated, leading to its proteasomal degradation. Deubiquitinated by USP9X. In terms of processing, O-glycosylated; contains O-GlcNAc. O-glycosylation by OGT prevents protein degradation by inhibiting ubiquitination. It also stabilizes the CLOCK-BMAL1 heterodimer thereby increasing CLOCK-BMAL1-mediated transcription of genes in the negative loop of the circadian clock such as PER1/2/3 and CRY1/2. Post-translationally, acetylated on Lys-538 by CLOCK during the repression phase of the circadian cycle. Acetylation facilitates recruitment of CRY1 protein and initiates the repression phase of the circadian cycle. Acetylated at Lys-538 by KAT5 during the activation phase of the cycle, leading to recruitment of the positive transcription elongation factor b (P-TEFb) and BRD4, followed by productive elongation of circadian transcripts. Deacetylated by SIRT1, which may result in decreased protein stability. Phosphorylated upon dimerization with CLOCK. Phosphorylation enhances the transcriptional activity, alters the subcellular localization and decreases the stability of the CLOCK-BMAL1 heterodimer by promoting its degradation. Phosphorylation shows circadian variations in the liver with a peak between CT10 to CT14. Phosphorylation at Ser-90 by CK2 is essential for its nuclear localization, its interaction with CLOCK and controls CLOCK nuclear entry. Dephosphorylation at Ser-78 is important for dimerization with CLOCK and transcriptional activity. In terms of processing, sumoylated on Lys-259 upon dimerization with CLOCK. Predominantly conjugated to poly-SUMO2/3 rather than SUMO1 and the level of these conjugates undergo rhythmic variation, peaking at CT9-CT12. Sumoylation localizes it exclusively to the PML body and promotes its ubiquitination in the PML body, ubiquitin-dependent proteasomal degradation and the transcriptional activity of the CLOCK-BMAL1 heterodimer. Post-translationally, undergoes lysosome-mediated degradation in a time-dependent manner in the liver.

The protein resides in the nucleus. It is found in the cytoplasm. Its subcellular location is the PML body. In terms of biological role, transcriptional activator which forms a core component of the circadian clock. The circadian clock, an internal time-keeping system, regulates various physiological processes through the generation of approximately 24 hour circadian rhythms in gene expression, which are translated into rhythms in metabolism and behavior. It is derived from the Latin roots 'circa' (about) and 'diem' (day) and acts as an important regulator of a wide array of physiological functions including metabolism, sleep, body temperature, blood pressure, endocrine, immune, cardiovascular, and renal function. Consists of two major components: the central clock, residing in the suprachiasmatic nucleus (SCN) of the brain, and the peripheral clocks that are present in nearly every tissue and organ system. Both the central and peripheral clocks can be reset by environmental cues, also known as Zeitgebers (German for 'timegivers'). The predominant Zeitgeber for the central clock is light, which is sensed by retina and signals directly to the SCN. The central clock entrains the peripheral clocks through neuronal and hormonal signals, body temperature and feeding-related cues, aligning all clocks with the external light/dark cycle. Circadian rhythms allow an organism to achieve temporal homeostasis with its environment at the molecular level by regulating gene expression to create a peak of protein expression once every 24 hours to control when a particular physiological process is most active with respect to the solar day. Transcription and translation of core clock components (CLOCK, NPAS2, BMAL1, BMAL2, PER1, PER2, PER3, CRY1 and CRY2) plays a critical role in rhythm generation, whereas delays imposed by post-translational modifications (PTMs) are important for determining the period (tau) of the rhythms (tau refers to the period of a rhythm and is the length, in time, of one complete cycle). A diurnal rhythm is synchronized with the day/night cycle, while the ultradian and infradian rhythms have a period shorter and longer than 24 hours, respectively. Disruptions in the circadian rhythms contribute to the pathology of cardiovascular diseases, cancer, metabolic syndromes and aging. A transcription/translation feedback loop (TTFL) forms the core of the molecular circadian clock mechanism. Transcription factors, CLOCK or NPAS2 and BMAL1 or BMAL2, form the positive limb of the feedback loop, act in the form of a heterodimer and activate the transcription of core clock genes and clock-controlled genes (involved in key metabolic processes), harboring E-box elements (5'-CACGTG-3') within their promoters. The core clock genes: PER1/2/3 and CRY1/2 which are transcriptional repressors form the negative limb of the feedback loop and interact with the CLOCK|NPAS2-BMAL1|BMAL2 heterodimer inhibiting its activity and thereby negatively regulating their own expression. This heterodimer also activates nuclear receptors NR1D1/2 and RORA/B/G, which form a second feedback loop and which activate and repress BMAL1 transcription, respectively. BMAL1 positively regulates myogenesis and negatively regulates adipogenesis via the transcriptional control of the genes of the canonical Wnt signaling pathway. Plays a role in normal pancreatic beta-cell function; regulates glucose-stimulated insulin secretion via the regulation of antioxidant genes NFE2L2/NRF2 and its targets SESN2, PRDX3, CCLC and CCLM. Negatively regulates the mTORC1 signaling pathway; regulates the expression of MTOR and DEPTOR. Controls diurnal oscillations of Ly6C inflammatory monocytes; rhythmic recruitment of the PRC2 complex imparts diurnal variation to chemokine expression that is necessary to sustain Ly6C monocyte rhythms. Regulates the expression of HSD3B2, STAR, PTGS2, CYP11A1, CYP19A1 and LHCGR in the ovary and also the genes involved in hair growth. Plays an important role in adult hippocampal neurogenesis by regulating the timely entry of neural stem/progenitor cells (NSPCs) into the cell cycle and the number of cell divisions that take place prior to cell-cycle exit. Regulates the circadian expression of CIART and KLF11. The CLOCK-BMAL1 heterodimer regulates the circadian expression of SERPINE1/PAI1, VWF, B3, CCRN4L/NOC, NAMPT, DBP, MYOD1, PPARGC1A, PPARGC1B, SIRT1, GYS2, F7, NGFR, GNRHR, BHLHE40/DEC1, ATF4, MTA1, KLF10 and also genes implicated in glucose and lipid metabolism. Promotes rhythmic chromatin opening, regulating the DNA accessibility of other transcription factors. May play a role in spermatogenesis; contributes to the chromatoid body assembly and physiology. The NPAS2-BMAL1 heterodimer positively regulates the expression of MAOA, F7 and LDHA and modulates the circadian rhythm of daytime contrast sensitivity by regulating the rhythmic expression of adenylate cyclase type 1 (ADCY1) in the retina. The preferred binding motif for the CLOCK-BMAL1 heterodimer is 5'-CACGTGA-3', which contains a flanking adenine nucleotide at the 3-prime end of the canonical 6-nucleotide E-box sequence. CLOCK specifically binds to the half-site 5'-CAC-3', while BMAL1 binds to the half-site 5'-GTGA-3'. The CLOCK-BMAL1 heterodimer also recognizes the non-canonical E-box motifs 5'-AACGTGA-3' and 5'-CATGTGA-3'. Essential for the rhythmic interaction of CLOCK with ASS1 and plays a critical role in positively regulating CLOCK-mediated acetylation of ASS1. Plays a role in protecting against lethal sepsis by limiting the expression of immune checkpoint protein CD274 in macrophages in a PKM2-dependent manner. Regulates the diurnal rhythms of skeletal muscle metabolism via transcriptional activation of genes promoting triglyceride synthesis (DGAT2) and metabolic efficiency (COQ10B). The polypeptide is Basic helix-loop-helix ARNT-like protein 1 (Rattus norvegicus (Rat)).